Consider the following 287-residue polypeptide: Ribosomal RNA small subunit methyltransferase I (287 aa).

This sequence belongs to the methyltransferase superfamily. RsmI family.

It localises to the cytoplasm. The catalysed reaction is cytidine(1402) in 16S rRNA + S-adenosyl-L-methionine = 2'-O-methylcytidine(1402) in 16S rRNA + S-adenosyl-L-homocysteine + H(+). In terms of biological role, catalyzes the 2'-O-methylation of the ribose of cytidine 1402 (C1402) in 16S rRNA. The chain is Ribosomal RNA small subunit methyltransferase I from Helicobacter pylori (strain ATCC 700392 / 26695) (Campylobacter pylori).